Reading from the N-terminus, the 192-residue chain is Adenylate kinase (192 aa).

Position 10-15 (10-15 (GAGKGT)) interacts with ATP. The NMP stretch occupies residues 30–59 (STGDMLREVIRRETEIGKKAKAMINAGTLV). AMP is bound by residues Thr31, Arg36, 57 to 59 (TLV), 85 to 88 (GYPR), and Gln92. An LID region spans residues 126–142 (KRVQETIIAGGQVRSDD). Arg127 serves as a coordination point for ATP. Residues Arg139 and Arg150 each contribute to the AMP site. Position 178 (Ile178) interacts with ATP.

This sequence belongs to the adenylate kinase family. As to quaternary structure, monomer.

It is found in the cytoplasm. The enzyme catalyses AMP + ATP = 2 ADP. Its pathway is purine metabolism; AMP biosynthesis via salvage pathway; AMP from ADP: step 1/1. Catalyzes the reversible transfer of the terminal phosphate group between ATP and AMP. Plays an important role in cellular energy homeostasis and in adenine nucleotide metabolism. This chain is Adenylate kinase, found in Bartonella henselae (strain ATCC 49882 / DSM 28221 / CCUG 30454 / Houston 1) (Rochalimaea henselae).